The sequence spans 173 residues: Putative metal-dependent hydrolase BCE_2729 (173 aa).

Residues histidine 65, histidine 156, and histidine 160 each contribute to the Zn(2+) site.

Belongs to the metal hydrolase YfiT family. Homodimer. Zn(2+) serves as cofactor.

Its subcellular location is the cytoplasm. In terms of biological role, possible metal-dependent hydrolase. In Bacillus cereus (strain ATCC 10987 / NRS 248), this protein is Putative metal-dependent hydrolase BCE_2729.